The chain runs to 974 residues: Ephrin type-B receptor 3 (974 aa).

The signal sequence occupies residues 1–16 (MLPAVFVILALSAVQG). Residues 17–534 (LEETLMDTKW…RSSLQEQVPM (518 aa)) lie on the Extracellular side of the membrane. The Eph LBD domain occupies 18 to 196 (EETLMDTKWT…FFKKCPRTTA (179 aa)). C60 and C178 are joined by a disulfide. Fibronectin type-III domains follow at residues 318–426 (VPSA…TNQA) and 427–522 (APSS…IAED). Residues N330 and N420 are each glycosylated (N-linked (GlcNAc...) asparagine). A helical membrane pass occupies residues 535-555 (VVGSVTAGLIFIIAVVIIVIV). At 556 to 974 (CFSRKQRNDS…QMSQTLPVQV (419 aa)) the chain is on the cytoplasmic side. Phosphotyrosine; by autocatalysis is present on Y590. The Protein kinase domain maps to 609–872 (VKIEEVIGAG…QIVSSLDKLI (264 aa)). Residues 615 to 623 (IGAGEFGEV) and K641 contribute to the ATP site. D734 functions as the Proton acceptor in the catalytic mechanism. The region spanning 901–965 (TTFPTVSDWL…LNSVQDMRLQ (65 aa)) is the SAM domain. The PDZ-binding motif lies at 972–974 (VQV).

The protein belongs to the protein kinase superfamily. Tyr protein kinase family. Ephrin receptor subfamily. Heterotetramer upon binding of the ligand. The heterotetramer is composed of an ephrin dimer and a receptor dimer. Oligomerization is probably required to induce biological responses. Phosphorylated. Autophosphorylates upon ligand-binding. Autophosphorylation on Tyr-590 is required for interaction with SH2 domain-containing proteins. In terms of tissue distribution, expressed in the embryo in pre-somitic mesoderm, caudal somites, midbrain, and cement gland. Most abundant in adult brain, eye, heart, lung and ovary. Lower levels in intestine, kidney, oviduct and pharynx.

The protein localises to the cell membrane. The protein resides in the cell projection. Its subcellular location is the dendrite. The catalysed reaction is L-tyrosyl-[protein] + ATP = O-phospho-L-tyrosyl-[protein] + ADP + H(+). Receptor tyrosine kinase which binds promiscuously transmembrane ephrin-B family ligands residing on adjacent cells, leading to contact-dependent bidirectional signaling into neighboring cells. The signaling pathway downstream of the receptor is referred to as forward signaling while the signaling pathway downstream of the ephrin ligand is referred to as reverse signaling. Generally has an overlapping and redundant function with EPHB2. Like EPHB2, functions in axon guidance during development. In addition to its role in axon guidance also plays an important redundant role with other ephrin-B receptors in development and maturation of dendritic spines and the formation of excitatory synapses. May control other aspects of development through regulation of cell migration and positioning. The polypeptide is Ephrin type-B receptor 3 (ephb3) (Xenopus laevis (African clawed frog)).